Here is a 374-residue protein sequence, read N- to C-terminus: Beta-1,3-N-acetylglucosaminyltransferase lunatic fringe (374 aa).

At 1 to 8 (MLKTYRGK) the chain is on the cytoplasmic side. A helical; Signal-anchor for type II membrane protein transmembrane segment spans residues 9–29 (VVVSLAGATVTCLGFLLFLSQ). Topologically, residues 30–374 (HQRIQADGMQ…TPWCPPQVAY (345 aa)) are lumenal. An N-linked (GlcNAc...) asparagine glycan is attached at N40. A disordered region spans residues 80 to 100 (RSRREADKPSEAPGAATDAPP). R123 provides a ligand contact to substrate. The N-linked (GlcNAc...) asparagine glycan is linked to N162. Intrachain disulfides connect C163-C174 and C192-C255. A substrate-binding site is contributed by D196. Mn(2+) is bound at residue D197. The active site involves D285. H309 contributes to the Mn(2+) binding site. C359 and C368 are disulfide-bonded.

It belongs to the glycosyltransferase 31 family. It depends on Mn(2+) as a cofactor. The cofactor is Co(2+). In terms of processing, a soluble form may be derived from the membrane form by proteolytic processing. In terms of tissue distribution, in the embryo, expressed along the A-P axis of the neural tube, within the lateral plate mesoderm, in the presomitic mesoderm and the somites, in specific rhombomeres of the hindbrain (even-numbered rhombomeres) and in the otic vesicles.

It localises to the golgi apparatus membrane. The catalysed reaction is 3-O-(alpha-L-fucosyl)-L-threonyl-[EGF-like domain protein] + UDP-N-acetyl-alpha-D-glucosamine = 3-O-(N-acetyl-beta-D-glucosaminyl-(1-&gt;3)-alpha-L-fucosyl)-L-threonyl-[EGF-like domain protein] + UDP + H(+). The enzyme catalyses 3-O-(alpha-L-fucosyl)-L-seryl-[EGF-like domain protein] + UDP-N-acetyl-alpha-D-glucosamine = 3-O-(N-acetyl-beta-D-glucosaminyl-(1-&gt;3)-alpha-L-fucosyl)-L-seryl-[EGF-like domain protein] + UDP + H(+). Functionally, glycosyltransferase that initiates the elongation of O-linked fucose residues attached to EGF-like repeats in the extracellular domain of Notch molecules. Involved in the correct formation of boundaries in the somites and hindbrain. Required for Delta-Notch-mediated induction of hypochord cells at the lateral borders of the midline precursor domain. The protein is Beta-1,3-N-acetylglucosaminyltransferase lunatic fringe (lfng) of Danio rerio (Zebrafish).